We begin with the raw amino-acid sequence, 34 residues long: DDIT3 upstream open reading frame protein (34 aa).

Interacts with DDIT3 (isoform 1).

The protein localises to the nucleus. The protein resides in the cytoplasm. Functionally, product of the upstream open reading frame (uORF) of DDIT3/CHOP that is specifically produced in absence of stress, thereby preventing translation of downstream stress effector DDIT3/CHOP. This is DDIT3 upstream open reading frame protein from Homo sapiens (Human).